The primary structure comprises 759 residues: ARF GTPase-activating protein GIT2 (759 aa).

Residues 1 to 124 (MSKRLRSSEV…AFVHRLPCRD (124 aa)) enclose the Arf-GAP domain. Residues 11-34 (CADCSGPDPSWASVNRGTFLCDEC) form a C4-type zinc finger. 3 ANK repeats span residues 132 to 161 (DLSKQLHSSVRTGNLETCLRLLSLGAQANF), 166 to 195 (KGNTPLHVASKAGQILQAELLAVYGADPGT), and 199 to 228 (SGKTPVDYARQGGHHELAERLVEIQYELTD). Positions 379-422 (QHSVESQDNDQPDYDSVASDEDTDLETTASKTNRQKSLDSDLSD) are disordered. Positions 385 to 403 (QDNDQPDYDSVASDEDTDL) are enriched in acidic residues. A phosphoserine mark is found at Ser394 and Ser397. At Thr401 the chain carries Phosphothreonine. Phosphoserine is present on residues Ser415, Ser418, and Ser421. Positions 437-478 (LVASEAKIQQLMKVNNNLSDELRIMQKKLQTLQSENSNLRKQ) form a coiled coil. The segment covering 480-499 (TTNVYQVQTGSEYTDTSNHS) has biased composition (polar residues). Disordered stretches follow at residues 480–538 (TTNV…EESR) and 554–643 (VTSS…TEDV). Residue Tyr484 is modified to Phosphotyrosine. A compositionally biased stretch (low complexity) spans 555 to 569 (TSSSSLPSFPSTLSW). Residues Ser559, Ser562, and Ser570 each carry the phosphoserine modification. The segment covering 570–583 (SRDESARRASRLEK) has biased composition (basic and acidic residues). Polar residues predominate over residues 584-597 (QNSTPESDYDNTPN). Thr587 is subject to Phosphothreonine. Phosphoserine is present on Ser614.

As to quaternary structure, may form heterooligomers with GIT1. Directly interacts with protein Piccolo/PCLO. Interacts with PPFIA1 and PPFIA2. Interacts with ARHGEF7. Identified in a complex with ARHGEF6 and BIN2. Interacts with PAK3. Interacts with PXN/paxillin. Interacts with TGFB1I1. Forms a complex with EFNB1 and GRB4/NCK2.

Its function is as follows. GTPase-activating protein for ADP ribosylation factor family members, including ARF1. This is ARF GTPase-activating protein GIT2 (GIT2) from Homo sapiens (Human).